Here is a 339-residue protein sequence, read N- to C-terminus: Dihydroorotate dehydrogenase (quinone) (339 aa).

Residues 62–66 (AGLDK) and T86 each bind FMN. K66 lines the substrate pocket. Residue 111-115 (NRMGF) coordinates substrate. FMN-binding residues include N139 and N172. Residue N172 coordinates substrate. The active-site Nucleophile is S175. N177 lines the substrate pocket. K217 and T245 together coordinate FMN. 246–247 (NT) contributes to the substrate binding site. Residues G268, G297, and 318 to 319 (YS) each bind FMN.

The protein belongs to the dihydroorotate dehydrogenase family. Type 2 subfamily. As to quaternary structure, monomer. FMN serves as cofactor.

The protein localises to the cell membrane. The catalysed reaction is (S)-dihydroorotate + a quinone = orotate + a quinol. The protein operates within pyrimidine metabolism; UMP biosynthesis via de novo pathway; orotate from (S)-dihydroorotate (quinone route): step 1/1. Its function is as follows. Catalyzes the conversion of dihydroorotate to orotate with quinone as electron acceptor. This is Dihydroorotate dehydrogenase (quinone) from Shewanella denitrificans (strain OS217 / ATCC BAA-1090 / DSM 15013).